An 800-amino-acid polypeptide reads, in one-letter code: Protein gfi-3 (800 aa).

Residues 346–366 (ESLQQAQLRNDEICHQMANIE) are a coiled coil. TPR repeat units follow at residues 526-559 (AIGA…YPEE) and 637-670 (IRIH…AENT).

In terms of assembly, the APC/C complex is probably composed of at least 12 subunits: apc-2, apc-10, apc-11, cdc-26, emb-1, emb-27, emb-30, mat-1, mat-2, mat-3, such-1 and gfi-3. Expressed in gut cells and mature sperm stored in the spermatheca.

Its pathway is protein modification; protein ubiquitination. Functionally, probable component of the anaphase promoting complex/cyclosome (APC/C), a cell cycle-regulated E3 ubiquitin ligase that controls progression through mitosis and the G1 phase of the cell cycle. The APC/C complex acts by mediating ubiquitination and subsequent degradation of target proteins. Required for the metaphase to anaphase transition in meiosis. The chain is Protein gfi-3 from Caenorhabditis elegans.